The primary structure comprises 208 residues: Putative archaetidylserine decarboxylase proenzyme (208 aa).

Ser171 functions as the Schiff-base intermediate with substrate; via pyruvic acid in the catalytic mechanism. Position 171 is a pyruvic acid (Ser); by autocatalysis (Ser171).

The protein belongs to the phosphatidylserine decarboxylase family. PSD-A subfamily. As to quaternary structure, heterodimer of a large membrane-associated beta subunit and a small pyruvoyl-containing alpha subunit. Pyruvate serves as cofactor. In terms of processing, is synthesized initially as an inactive proenzyme. Formation of the active enzyme involves a self-maturation process in which the active site pyruvoyl group is generated from an internal serine residue via an autocatalytic post-translational modification. Two non-identical subunits are generated from the proenzyme in this reaction, and the pyruvate is formed at the N-terminus of the alpha chain, which is derived from the carboxyl end of the proenzyme. The post-translation cleavage follows an unusual pathway, termed non-hydrolytic serinolysis, in which the side chain hydroxyl group of the serine supplies its oxygen atom to form the C-terminus of the beta chain, while the remainder of the serine residue undergoes an oxidative deamination to produce ammonia and the pyruvoyl prosthetic group on the alpha chain.

The protein resides in the cell membrane. The enzyme catalyses archaetidylserine + H(+) = archaetidylethanolamine + CO2. Its function is as follows. Catalyzes the formation of archaetidylethanolamine (PtdEtn) from archaetidylserine (PtdSer). This is Putative archaetidylserine decarboxylase proenzyme from Methanococcoides burtonii (strain DSM 6242 / NBRC 107633 / OCM 468 / ACE-M).